We begin with the raw amino-acid sequence, 128 residues long: Aspartate 1-decarboxylase (128 aa).

Ser25 functions as the Schiff-base intermediate with substrate; via pyruvic acid in the catalytic mechanism. At Ser25 the chain carries Pyruvic acid (Ser). Thr57 serves as a coordination point for substrate. Tyr58 functions as the Proton donor in the catalytic mechanism. 73-75 (GAA) provides a ligand contact to substrate.

Belongs to the PanD family. In terms of assembly, heterooctamer of four alpha and four beta subunits. Requires pyruvate as cofactor. Is synthesized initially as an inactive proenzyme, which is activated by self-cleavage at a specific serine bond to produce a beta-subunit with a hydroxyl group at its C-terminus and an alpha-subunit with a pyruvoyl group at its N-terminus.

Its subcellular location is the cytoplasm. It catalyses the reaction L-aspartate + H(+) = beta-alanine + CO2. Its pathway is cofactor biosynthesis; (R)-pantothenate biosynthesis; beta-alanine from L-aspartate: step 1/1. In terms of biological role, catalyzes the pyruvoyl-dependent decarboxylation of aspartate to produce beta-alanine. The sequence is that of Aspartate 1-decarboxylase from Caldicellulosiruptor bescii (strain ATCC BAA-1888 / DSM 6725 / KCTC 15123 / Z-1320) (Anaerocellum thermophilum).